The primary structure comprises 433 residues: MATTWGAAFFMLVASCVCSTVFHRDQQTWFEGVFLSSMCPINVSASTLYGIMFDAGSTGTRIHIYTFVQKIPGQLPILEGEIFESVKPGLSAFVDQPKQGAETVEELLEVAKDSVPRSHWKRTPVVLKATAGLRLLPEQKAEALLFEVREIFRKSPFLVPDDSVSIMDGSYEGILAWVTVNFLTGQLHGHSQKTVGTLDLGGASTQITFLPQFEKTLEQTPRGYLTSFEMFNSTYKLYTHSYLGFGLKAARLATLGALETEGIDGHTFRSACLPRWLEAEWIFGGVKYQYGGNKEGNEGSGEVGFEPCYAEVLRVVQGKLHQPDEVRKSSFYAFSYYYDRAADTDMIDYETGGVLKVEDFERKAREVCDNLEKFTSGSPFLCMDLSYITALLKDGFGFADSTILQLSKKVNNIETGWALGATFHLLQSLGISH.

An N-terminal signal peptide occupies residues 1–24; the sequence is MATTWGAAFFMLVASCVCSTVFHR. The active-site Proton acceptor is E172. Residue N232 is glycosylated (N-linked (GlcNAc...) asparagine). 2 disulfides stabilise this stretch: C272-C308 and C368-C382.

This sequence belongs to the GDA1/CD39 NTPase family. Monomer; active form. Homodimer; disulfide-linked. Homodimers are enzymatically inactive. Ca(2+) is required as a cofactor. It depends on Mg(2+) as a cofactor. In terms of processing, N-glycosylated; high-mannose type.

Its subcellular location is the endoplasmic reticulum. It localises to the secreted. It catalyses the reaction a ribonucleoside 5'-diphosphate + H2O = a ribonucleoside 5'-phosphate + phosphate + H(+). The catalysed reaction is GDP + H2O = GMP + phosphate + H(+). The enzyme catalyses UDP + H2O = UMP + phosphate + H(+). It carries out the reaction IDP + H2O = IMP + phosphate + H(+). It catalyses the reaction CDP + H2O = CMP + phosphate + H(+). The catalysed reaction is ADP + H2O = AMP + phosphate + H(+). It participates in protein modification; protein glycosylation. In terms of biological role, hydrolyzes nucleoside diphosphates with a preference for GDP, IDP and UDP compared to ADP and CDP. In the lumen of the endoplasmic reticulum, hydrolyzes UDP that acts as an end-product feedback inhibitor of the UDP-Glc:glycoprotein glucosyltransferases. UMP can be transported back by an UDP-sugar antiporter to the cytosol where it is consumed to regenerate UDP-glucose. Therefore, it positively regulates protein reglucosylation by clearing UDP from the ER lumen and by promoting the regeneration of UDP-glucose. Protein reglucosylation is essential to proper glycoprotein folding and quality control in the ER. This is Ectonucleoside triphosphate diphosphohydrolase 5 (ENTPD5) from Ailuropoda melanoleuca (Giant panda).